The sequence spans 163 residues: Cyclic pyranopterin monophosphate synthase (163 aa).

Substrate-binding positions include 75–77 (LCH) and 113–114 (ME). Residue Asp-128 is part of the active site.

It belongs to the MoaC family. As to quaternary structure, homohexamer; trimer of dimers.

The catalysed reaction is (8S)-3',8-cyclo-7,8-dihydroguanosine 5'-triphosphate = cyclic pyranopterin phosphate + diphosphate. The protein operates within cofactor biosynthesis; molybdopterin biosynthesis. Its function is as follows. Catalyzes the conversion of (8S)-3',8-cyclo-7,8-dihydroguanosine 5'-triphosphate to cyclic pyranopterin monophosphate (cPMP). In Jannaschia sp. (strain CCS1), this protein is Cyclic pyranopterin monophosphate synthase.